The following is a 357-amino-acid chain: NADH-quinone oxidoreductase subunit H (357 aa).

8 helical membrane-spanning segments follow: residues 20–40 (WLVV…ILCV), 92–112 (ILFI…WAVV), 127–147 (LLYV…AGWA), 165–185 (VSYE…SGSL), 206–226 (FLSW…ISAV), 268–288 (ILLS…PIDI), 294–314 (IPGW…FIWF), and 329–349 (LGWK…AIWM).

It belongs to the complex I subunit 1 family. As to quaternary structure, NDH-1 is composed of 14 different subunits. Subunits NuoA, H, J, K, L, M, N constitute the membrane sector of the complex.

Its subcellular location is the cell inner membrane. The catalysed reaction is a quinone + NADH + 5 H(+)(in) = a quinol + NAD(+) + 4 H(+)(out). Its function is as follows. NDH-1 shuttles electrons from NADH, via FMN and iron-sulfur (Fe-S) centers, to quinones in the respiratory chain. The immediate electron acceptor for the enzyme in this species is believed to be ubiquinone. Couples the redox reaction to proton translocation (for every two electrons transferred, four hydrogen ions are translocated across the cytoplasmic membrane), and thus conserves the redox energy in a proton gradient. This subunit may bind ubiquinone. The chain is NADH-quinone oxidoreductase subunit H from Bordetella avium (strain 197N).